A 177-amino-acid chain; its full sequence is B-phycoerythrin beta chain (177 aa).

The phycourobilin site is built by C50 and C61. N72 is modified (N4-methylasparagine). Residues C82 and C158 each contribute to the (2R,3E)-phycoerythrobilin site.

It belongs to the phycobiliprotein family. As to quaternary structure, heteromer of 6 alpha, 6 beta and one gamma chain. In terms of processing, contains two covalently linked phycoerythrobilin chromophores and one covalently linked phycourobilin chromophore.

Its subcellular location is the plastid. It localises to the chloroplast thylakoid membrane. Its function is as follows. Light-harvesting photosynthetic bile pigment-protein from the phycobiliprotein complex. The protein is B-phycoerythrin beta chain (cpeB) of Porphyridium purpureum (Red alga).